We begin with the raw amino-acid sequence, 204 residues long: Inner membrane-spanning protein YciB (204 aa).

The next 6 helical transmembrane spans lie at A3–F23, I45–I65, L70–W90, L107–F127, W145–T165, and W168–M188.

It belongs to the YciB family.

It is found in the cell inner membrane. Plays a role in cell envelope biogenesis, maintenance of cell envelope integrity and membrane homeostasis. The protein is Inner membrane-spanning protein YciB of Agrobacterium fabrum (strain C58 / ATCC 33970) (Agrobacterium tumefaciens (strain C58)).